Here is a 143-residue protein sequence, read N- to C-terminus: Large ribosomal subunit protein bL17 (143 aa).

Residues 124–133 are compositionally biased toward basic and acidic residues; it reads GAGDRARLEA. Residues 124-143 are disordered; that stretch reads GAGDRARLEAEGTDAEAAAA.

The protein belongs to the bacterial ribosomal protein bL17 family. In terms of assembly, part of the 50S ribosomal subunit. Contacts protein L32.

This Mesorhizobium japonicum (strain LMG 29417 / CECT 9101 / MAFF 303099) (Mesorhizobium loti (strain MAFF 303099)) protein is Large ribosomal subunit protein bL17.